The primary structure comprises 487 residues: Protein DETOXIFICATION 10 (487 aa).

The next 12 helical transmembrane spans lie at 35–55 (LICF…IQII), 73–93 (FAVS…SCAL), 122–142 (LVCL…VILG), 155–175 (AAWL…IRYF), 184–204 (LLVT…LLVY), 211–231 (IGGA…LGSF), 264–284 (AAML…SGLL), 293–313 (VLSI…AIAA), 333–353 (IVVY…SMSL), 377–397 (MAPL…LSGV), 412–432 (FGAF…WVHL), and 435–455 (VGLW…LALV).

Belongs to the multi antimicrobial extrusion (MATE) (TC 2.A.66.1) family.

It localises to the membrane. This chain is Protein DETOXIFICATION 10, found in Arabidopsis thaliana (Mouse-ear cress).